A 208-amino-acid polypeptide reads, in one-letter code: 3-demethoxyubiquinol 3-hydroxylase (208 aa).

6 residues coordinate Fe cation: Glu57, Glu87, His90, Glu139, Glu171, and His174.

Belongs to the COQ7 family. Fe cation serves as cofactor.

It is found in the cell membrane. It carries out the reaction a 5-methoxy-2-methyl-3-(all-trans-polyprenyl)benzene-1,4-diol + AH2 + O2 = a 3-demethylubiquinol + A + H2O. It participates in cofactor biosynthesis; ubiquinone biosynthesis. Functionally, catalyzes the hydroxylation of 2-nonaprenyl-3-methyl-6-methoxy-1,4-benzoquinol during ubiquinone biosynthesis. The polypeptide is 3-demethoxyubiquinol 3-hydroxylase (Nitrosomonas eutropha (strain DSM 101675 / C91 / Nm57)).